A 284-amino-acid chain; its full sequence is MEMO1 family protein MmarC6_1286 (284 aa).

This sequence belongs to the MEMO1 family.

This chain is MEMO1 family protein MmarC6_1286, found in Methanococcus maripaludis (strain C6 / ATCC BAA-1332).